We begin with the raw amino-acid sequence, 94 residues long: Cell division topological specificity factor (94 aa).

This sequence belongs to the MinE family.

Its function is as follows. Prevents the cell division inhibition by proteins MinC and MinD at internal division sites while permitting inhibition at polar sites. This ensures cell division at the proper site by restricting the formation of a division septum at the midpoint of the long axis of the cell. The sequence is that of Cell division topological specificity factor from Clostridioides difficile (strain 630) (Peptoclostridium difficile).